We begin with the raw amino-acid sequence, 623 residues long: MCGIVGYIGQAGDTRNYYALDVVLEGLRRLEYRGYDSAGVAVYADGEISFRKKAGKVAALETEIARAPLPDSVLGIGHTRWATHGGPTDVNAHPHVVAGGRLAVVHNGIIENFSELRAELTAKGYNFVSSTDTEVAATLLAEIYKTEAEGDLTRAMQLTGQRLDGAFTLLAIHVDHPDRIVAARRNSPLVIGLGEGENFLGSDVSGFIDYTRSAVELSNDQVVTITADSYEITDFHGAPSEGKPFAVEWDAAAAEKGGFHSFMDKEIHDQPAAVRDTLLGRMDEDGKLMLDELRIDESILRSVDKIIVVACGTAAYAGQVARYAIEHWCRIPTEVELAHEFRYRDPIVNEKTLVVALSQSGETMDTLMAVRHAREQGAKVVAICNTVGSTLPREADACLYTYAGPEIAVASTKAFLAQITASYLLGLYLAQLRGNKFADEVRVILDSLREMPAKIQEVIDNEEQIKQLGRSMVDAKSVLFLGRHVGYPVALEGALKLKEIAYLHAEGFAAGELKHGPIALVEDGQPVFVIVPSPRGRDSLHAKVVSNIQEIRARGAVTIVIAEEGDTAVDEHANYIIRIPQAPTLMQPLLATVPLQIFACAVATEKGFDVDQPRNLAKSVTVE.

Catalysis depends on Cys-2, which acts as the Nucleophile; for GATase activity. The 227-residue stretch at 2 to 228 folds into the Glutamine amidotransferase type-2 domain; sequence CGIVGYIGQA…NDQVVTITAD (227 aa). 2 SIS domains span residues 295-435 and 468-613; these read IDES…LRGN and LGRS…VDQP. Lys-618 functions as the For Fru-6P isomerization activity in the catalytic mechanism.

Homodimer.

The protein resides in the cytoplasm. The enzyme catalyses D-fructose 6-phosphate + L-glutamine = D-glucosamine 6-phosphate + L-glutamate. Functionally, catalyzes the first step in hexosamine metabolism, converting fructose-6P into glucosamine-6P using glutamine as a nitrogen source. The polypeptide is Glutamine--fructose-6-phosphate aminotransferase [isomerizing] (Corynebacterium efficiens (strain DSM 44549 / YS-314 / AJ 12310 / JCM 11189 / NBRC 100395)).